Here is an 821-residue protein sequence, read N- to C-terminus: Ent-isokaur-15-ene synthase (821 aa).

Mg(2+) contacts are provided by Asp-556, Asp-560, Asn-701, Thr-705, and Glu-709. A DDXXD motif motif is present at residues Asp-556–Asp-560.

Belongs to the terpene synthase family. Mg(2+) serves as cofactor.

The catalysed reaction is ent-copalyl diphosphate = ent-isokaurene + diphosphate. The protein operates within secondary metabolite biosynthesis; terpenoid biosynthesis. Involved in the biosynthesis of ent-kaurene diterpenoids natural products. Catalyzes the conversion of ent-copalyl diphosphate to the phytoalexin precursor ent-isokaur-15-ene. The chain is Ent-isokaur-15-ene synthase from Oryza sativa subsp. indica (Rice).